Consider the following 242-residue polypeptide: Biosynthetic peptidoglycan transglycosylase (242 aa).

A helical transmembrane segment spans residues 19 to 39; it reads LMVVLAVFWGGGIALFSVAPV.

Belongs to the glycosyltransferase 51 family.

It localises to the cell inner membrane. The enzyme catalyses [GlcNAc-(1-&gt;4)-Mur2Ac(oyl-L-Ala-gamma-D-Glu-L-Lys-D-Ala-D-Ala)](n)-di-trans,octa-cis-undecaprenyl diphosphate + beta-D-GlcNAc-(1-&gt;4)-Mur2Ac(oyl-L-Ala-gamma-D-Glu-L-Lys-D-Ala-D-Ala)-di-trans,octa-cis-undecaprenyl diphosphate = [GlcNAc-(1-&gt;4)-Mur2Ac(oyl-L-Ala-gamma-D-Glu-L-Lys-D-Ala-D-Ala)](n+1)-di-trans,octa-cis-undecaprenyl diphosphate + di-trans,octa-cis-undecaprenyl diphosphate + H(+). It participates in cell wall biogenesis; peptidoglycan biosynthesis. Its function is as follows. Peptidoglycan polymerase that catalyzes glycan chain elongation from lipid-linked precursors. The sequence is that of Biosynthetic peptidoglycan transglycosylase from Escherichia coli (strain 55989 / EAEC).